The chain runs to 252 residues: Ribosome maturation factor RimP (252 aa).

A disordered region spans residues 188-252; sequence QGAAPGTEGG…PAAGPGAQDE (65 aa). The segment covering 208 to 224 has biased composition (basic residues); it reads ARRPHQPKPKKAKKKGP.

Belongs to the RimP family.

The protein resides in the cytoplasm. Functionally, required for maturation of 30S ribosomal subunits. The polypeptide is Ribosome maturation factor RimP (Rhodospirillum centenum (strain ATCC 51521 / SW)).